We begin with the raw amino-acid sequence, 221 residues long: Putative 5'(3')-deoxyribonucleotidase R824 (221 aa).

Positions 16 and 18 each coordinate Mg(2+). Residue Asp-18 is the Nucleophile of the active site. 3 residues coordinate phosphate: Asp-18, Ser-103, and Lys-138. Asp-149 is a Mg(2+) binding site.

The protein belongs to the 5'(3')-deoxyribonucleotidase family. Mg(2+) serves as cofactor.

Dephosphorylates the 5' and 2'(3')-phosphates of deoxyribonucleotides. In Acanthamoeba polyphaga mimivirus (APMV), this protein is Putative 5'(3')-deoxyribonucleotidase R824.